Here is an 82-residue protein sequence, read N- to C-terminus: P2Y purinoceptor 2 (82 aa).

A helical transmembrane segment spans residues 1 to 25 (LPLSYGVVCVLGLCLNVVALYIFLC). At 26-35 (RLKTWNASTT) the chain is on the cytoplasmic side. The helical transmembrane segment at 36–56 (YMFHLAVSDSLYAASLPLLVY) threads the bilayer. The Extracellular portion of the chain corresponds to 57–75 (YYAQGDHWPFSTVLCKLVR). The chain crosses the membrane as a helical span at residues 76–82 (FLFYTNL).

This sequence belongs to the G-protein coupled receptor 1 family. Expressed in brain, heart, stria vascularis and vestibular labyrinth.

The protein localises to the cell membrane. Receptor for ATP and UTP coupled to G-proteins that activate a phosphatidylinositol-calcium second messenger system. Not activated by UDP. The sequence is that of P2Y purinoceptor 2 (P2RY2) from Meriones unguiculatus (Mongolian jird).